A 643-amino-acid polypeptide reads, in one-letter code: Extracellular metalloproteinase 4 (643 aa).

The first 18 residues, Met1–Ala18, serve as a signal peptide directing secretion. A propeptide spanning residues His19–Ala254 is cleaved from the precursor. The segment covering Thr47–Asp57 has biased composition (basic and acidic residues). Residues Thr47–Ser71 form a disordered region. Polar residues predominate over residues Phe60–Ser71. N-linked (GlcNAc...) asparagine glycans are attached at residues Asn271 and Asn420. A Zn(2+)-binding site is contributed by His437. Glu438 is a catalytic residue. Zn(2+) is bound at residue His441. N-linked (GlcNAc...) asparagine glycosylation is found at Asn510 and Asn553.

The protein belongs to the peptidase M36 family. The cofactor is Zn(2+).

The protein localises to the secreted. Its function is as follows. Secreted metalloproteinase probably acting as a virulence factor. The sequence is that of Extracellular metalloproteinase 4 (MEP4) from Arthroderma benhamiae (Trichophyton mentagrophytes).